A 133-amino-acid chain; its full sequence is MISITEWQKIGVGITGFGVFFILFGILLYFDSVLLAFGNLLFLTGLSLIIGLRRTFAFFFQRHKLKGTSFFLGGVAIVLLRWPLLGMLLEAYGFISLFKGFFPVVFGFLGSAFNIPFLSTLFQKLQGSSSSMV.

Residues 1–9 (MISITEWQK) are Cytoplasmic-facing. Residues 10-30 (IGVGITGFGVFFILFGILLYF) form a helical membrane-spanning segment. A topological domain (lumenal) is located at residue D31. Residues 32-52 (SVLLAFGNLLFLTGLSLIIGL) form a helical membrane-spanning segment. The Cytoplasmic portion of the chain corresponds to 53–68 (RRTFAFFFQRHKLKGT). Residues 69 to 89 (SFFLGGVAIVLLRWPLLGMLL) form a helical membrane-spanning segment. At 90-92 (EAY) the chain is on the lumenal side. The chain crosses the membrane as a helical span at residues 93 to 113 (GFISLFKGFFPVVFGFLGSAF). At 114–133 (NIPFLSTLFQKLQGSSSSMV) the chain is on the cytoplasmic side.

Belongs to the GOT1 family.

It is found in the golgi apparatus membrane. May be involved in fusion of ER-derived transport vesicles with the Golgi complex. This Mus musculus (Mouse) protein is Vesicle transport protein GOT1A.